The following is a 270-amino-acid chain: Hydroxyethylthiazole kinase (270 aa).

Met-47 is a binding site for substrate. Arg-123 and Thr-169 together coordinate ATP. Gly-196 is a substrate binding site.

Belongs to the Thz kinase family. It depends on Mg(2+) as a cofactor.

It catalyses the reaction 5-(2-hydroxyethyl)-4-methylthiazole + ATP = 4-methyl-5-(2-phosphooxyethyl)-thiazole + ADP + H(+). It functions in the pathway cofactor biosynthesis; thiamine diphosphate biosynthesis; 4-methyl-5-(2-phosphoethyl)-thiazole from 5-(2-hydroxyethyl)-4-methylthiazole: step 1/1. Its function is as follows. Catalyzes the phosphorylation of the hydroxyl group of 4-methyl-5-beta-hydroxyethylthiazole (THZ). This Roseiflexus sp. (strain RS-1) protein is Hydroxyethylthiazole kinase.